A 242-amino-acid chain; its full sequence is ATP synthase subunit b 2 (242 aa).

The chain crosses the membrane as a helical span at residues 4 to 24 (LLAISSLTLLASLVLLVVSPA). The segment at 43–74 (ADSEDGDHDHDHEGDDHGHDEAAGDEHGHGDG) is disordered. Positions 49–74 (DHDHDHEGDDHGHDEAAGDEHGHGDG) are enriched in basic and acidic residues.

It belongs to the ATPase B chain family. As to quaternary structure, F-type ATPases have 2 components, F(1) - the catalytic core - and F(0) - the membrane proton channel. F(1) has five subunits: alpha(3), beta(3), gamma(1), delta(1), epsilon(1). F(0) has three main subunits: a(1), b(2) and c(10-14). The alpha and beta chains form an alternating ring which encloses part of the gamma chain. F(1) is attached to F(0) by a central stalk formed by the gamma and epsilon chains, while a peripheral stalk is formed by the delta and b chains.

The protein localises to the cell inner membrane. In terms of biological role, f(1)F(0) ATP synthase produces ATP from ADP in the presence of a proton or sodium gradient. F-type ATPases consist of two structural domains, F(1) containing the extramembraneous catalytic core and F(0) containing the membrane proton channel, linked together by a central stalk and a peripheral stalk. During catalysis, ATP synthesis in the catalytic domain of F(1) is coupled via a rotary mechanism of the central stalk subunits to proton translocation. Component of the F(0) channel, it forms part of the peripheral stalk, linking F(1) to F(0). This chain is ATP synthase subunit b 2, found in Rhodopirellula baltica (strain DSM 10527 / NCIMB 13988 / SH1).